The primary structure comprises 517 residues: ATP synthase subunit alpha 1 (517 aa).

176–183 (GDRQTGKT) contacts ATP.

Belongs to the ATPase alpha/beta chains family. In terms of assembly, F-type ATPases have 2 components, CF(1) - the catalytic core - and CF(0) - the membrane proton channel. CF(1) has five subunits: alpha(3), beta(3), gamma(1), delta(1), epsilon(1). CF(0) has three main subunits: a(1), b(2) and c(9-12). The alpha and beta chains form an alternating ring which encloses part of the gamma chain. CF(1) is attached to CF(0) by a central stalk formed by the gamma and epsilon chains, while a peripheral stalk is formed by the delta and b chains.

The protein resides in the cell inner membrane. The catalysed reaction is ATP + H2O + 4 H(+)(in) = ADP + phosphate + 5 H(+)(out). In terms of biological role, produces ATP from ADP in the presence of a proton gradient across the membrane. The alpha chain is a regulatory subunit. This Shewanella frigidimarina (strain NCIMB 400) protein is ATP synthase subunit alpha 1.